A 387-amino-acid polypeptide reads, in one-letter code: GDP-mannose transporter (387 aa).

Residues 1–25 are compositionally biased toward basic and acidic residues; sequence MADTKKNDNYAIDMDKLDAESDRFR. The Cytoplasmic portion of the chain corresponds to 1-42; that stretch reads MADTKKNDNYAIDMDKLDAESDRFRPPPQPQPRHSSSSHSQS. The disordered stretch occupies residues 1-45; the sequence is MADTKKNDNYAIDMDKLDAESDRFRPPPQPQPRHSSSSHSQSISN. Positions 32–45 are enriched in low complexity; the sequence is PRHSSSSHSQSISN. A helical membrane pass occupies residues 43–63; sequence ISNSPVLPILSYCASSILMTV. At 64–71 the chain is on the lumenal side; the sequence is TNKYVLSG. The chain crosses the membrane as a helical span at residues 72-92; that stretch reads VQFNLNFFLLCVQSVVCIIAI. Over 93-112 the chain is Cytoplasmic; sequence QTCKSMGLINYRDFNSDEAK. A helical transmembrane segment spans residues 113 to 129; it reads KWFPISLLLIGMIYTGT. Residues 130–136 are Lumenal-facing; it reads KALKFLS. A helical membrane pass occupies residues 137-153; that stretch reads IPVYTIFKNLTIILIAY. Over 154-162 the chain is Cytoplasmic; sequence GEVLWFGGS. A helical transmembrane segment spans residues 163–184; it reads VTGMALFSFGLMVLSSVIAAWA. Topologically, residues 185–206 are lumenal; the sequence is DIKHALDTSGFSGAEATSKIST. Residues 207-227 traverse the membrane as a helical segment; it reads LNAGYIWMLINCLCTSTYILG. Over 228–241 the chain is Cytoplasmic; it reads MRKRIKLTNFKDFD. A helical membrane pass occupies residues 242 to 262; the sequence is TMFYNNLLSIPILMIGSFIVE. Topologically, residues 263–280 are lumenal; it reads DWSSENINKNFPIETRNS. A helical transmembrane segment spans residues 281–301; it reads LIFAMIFSGLSSVFISYTSAW. Residues 302–309 lie on the Cytoplasmic side of the membrane; that stretch reads CVRVTSST. The helical transmembrane segment at 310-329 threads the bilayer; it reads TYSMVGALNKLPIALSGLIF. Over 330–332 the chain is Lumenal; the sequence is FGD. The helical transmembrane segment at 333 to 355 threads the bilayer; it reads PVTVPSVSAIVVGFISGIVYSLA. The Cytoplasmic portion of the chain corresponds to 356 to 387; sequence KVKQNAKPRTGVLPTTNPVSASTQSMRDGLKS. Residues 366–387 are disordered; it reads GVLPTTNPVSASTQSMRDGLKS. Residues 368–381 are compositionally biased toward polar residues; it reads LPTTNPVSASTQSM.

The protein belongs to the TPT transporter family. SLC35D subfamily. In terms of assembly, homooligomer.

The protein localises to the golgi apparatus membrane. Its subcellular location is the cytoplasmic vesicle membrane. The protein resides in the endoplasmic reticulum membrane. Functionally, involved in the import of GDP-mannose from the cytoplasm into the Golgi lumen. This is GDP-mannose transporter (VRG4) from Coccidioides immitis (strain RS) (Valley fever fungus).